The primary structure comprises 267 residues: 1-(5-phosphoribosyl)-5-[(5-phosphoribosylamino)methylideneamino] imidazole-4-carboxamide isomerase (267 aa).

It belongs to the HisA/HisF family.

It is found in the cytoplasm. The enzyme catalyses 1-(5-phospho-beta-D-ribosyl)-5-[(5-phospho-beta-D-ribosylamino)methylideneamino]imidazole-4-carboxamide = 5-[(5-phospho-1-deoxy-D-ribulos-1-ylimino)methylamino]-1-(5-phospho-beta-D-ribosyl)imidazole-4-carboxamide. The protein operates within amino-acid biosynthesis; L-histidine biosynthesis; L-histidine from 5-phospho-alpha-D-ribose 1-diphosphate: step 4/9. This is 1-(5-phosphoribosyl)-5-[(5-phosphoribosylamino)methylideneamino] imidazole-4-carboxamide isomerase (HIS6) from Kluyveromyces lactis (strain ATCC 8585 / CBS 2359 / DSM 70799 / NBRC 1267 / NRRL Y-1140 / WM37) (Yeast).